A 443-amino-acid chain; its full sequence is ATP-dependent protease ATPase subunit HslU (443 aa).

Residues Ile-18, 60 to 65 (GVGKTE), Asp-256, Glu-321, and Arg-393 each bind ATP.

The protein belongs to the ClpX chaperone family. HslU subfamily. As to quaternary structure, a double ring-shaped homohexamer of HslV is capped on each side by a ring-shaped HslU homohexamer. The assembly of the HslU/HslV complex is dependent on binding of ATP.

Its subcellular location is the cytoplasm. Functionally, ATPase subunit of a proteasome-like degradation complex; this subunit has chaperone activity. The binding of ATP and its subsequent hydrolysis by HslU are essential for unfolding of protein substrates subsequently hydrolyzed by HslV. HslU recognizes the N-terminal part of its protein substrates and unfolds these before they are guided to HslV for hydrolysis. The sequence is that of ATP-dependent protease ATPase subunit HslU from Escherichia fergusonii (strain ATCC 35469 / DSM 13698 / CCUG 18766 / IAM 14443 / JCM 21226 / LMG 7866 / NBRC 102419 / NCTC 12128 / CDC 0568-73).